A 320-amino-acid polypeptide reads, in one-letter code: Lipoyl synthase (320 aa).

A compositionally biased stretch (polar residues) spans 1–11 (MGGMNDLSSTP). The disordered stretch occupies residues 1–24 (MGGMNDLSSTPAPEGDRPARQRKP). Residues 14–24 (EGDRPARQRKP) show a composition bias toward basic and acidic residues. [4Fe-4S] cluster contacts are provided by Cys53, Cys58, Cys64, Cys79, Cys83, Cys86, and Ser293. One can recognise a Radical SAM core domain in the interval 65-282 (WTKKHATVMI…GAIARAKGFL (218 aa)).

The protein belongs to the radical SAM superfamily. Lipoyl synthase family. [4Fe-4S] cluster is required as a cofactor.

It is found in the cytoplasm. The enzyme catalyses [[Fe-S] cluster scaffold protein carrying a second [4Fe-4S](2+) cluster] + N(6)-octanoyl-L-lysyl-[protein] + 2 oxidized [2Fe-2S]-[ferredoxin] + 2 S-adenosyl-L-methionine + 4 H(+) = [[Fe-S] cluster scaffold protein] + N(6)-[(R)-dihydrolipoyl]-L-lysyl-[protein] + 4 Fe(3+) + 2 hydrogen sulfide + 2 5'-deoxyadenosine + 2 L-methionine + 2 reduced [2Fe-2S]-[ferredoxin]. The protein operates within protein modification; protein lipoylation via endogenous pathway; protein N(6)-(lipoyl)lysine from octanoyl-[acyl-carrier-protein]: step 2/2. In terms of biological role, catalyzes the radical-mediated insertion of two sulfur atoms into the C-6 and C-8 positions of the octanoyl moiety bound to the lipoyl domains of lipoate-dependent enzymes, thereby converting the octanoylated domains into lipoylated derivatives. The polypeptide is Lipoyl synthase (Erythrobacter litoralis (strain HTCC2594)).